A 728-amino-acid polypeptide reads, in one-letter code: Catalase-peroxidase (728 aa).

The segment at 1–26 is disordered; sequence MDNPTDTAGKCPVAHGNKPRGPSNRD. The tryptophyl-tyrosyl-methioninium (Trp-Tyr) (with M-244) cross-link spans 96–218; it reads WHSAGTYRIT…LGAVQMGLIY (123 aa). The active-site Proton acceptor is the histidine 97. Residues 218 to 244 constitute a cross-link (tryptophyl-tyrosyl-methioninium (Tyr-Met) (with W-96)); it reads YVNPEGPNGNPDPVAAARDIRETFARM. Position 259 (histidine 259) interacts with heme b.

The protein belongs to the peroxidase family. Peroxidase/catalase subfamily. Homodimer or homotetramer. Heme b serves as cofactor. In terms of processing, formation of the three residue Trp-Tyr-Met cross-link is important for the catalase, but not the peroxidase activity of the enzyme.

The enzyme catalyses H2O2 + AH2 = A + 2 H2O. It catalyses the reaction 2 H2O2 = O2 + 2 H2O. Bifunctional enzyme with both catalase and broad-spectrum peroxidase activity. Important for stationary phase survival. The polypeptide is Catalase-peroxidase (Rhizobium etli (strain ATCC 51251 / DSM 11541 / JCM 21823 / NBRC 15573 / CFN 42)).